The following is a 312-amino-acid chain: Glycerol-3-phosphate phosphatase (312 aa).

Asp-30 (nucleophile) is an active-site residue. Mg(2+) contacts are provided by Asp-30, Asp-32, and Asp-251. Asp-32 acts as the Proton donor in catalysis.

The protein belongs to the HAD-like hydrolase superfamily. CbbY/CbbZ/Gph/YieH family. As to quaternary structure, homodimer. The cofactor is Mg(2+).

It carries out the reaction O-phospho-L-tyrosyl-[protein] + H2O = L-tyrosyl-[protein] + phosphate. The enzyme catalyses sn-glycerol 1-phosphate + H2O = glycerol + phosphate. The catalysed reaction is sn-glycerol 3-phosphate + H2O = glycerol + phosphate. Glycerol-3-phosphate phosphatase hydrolyzing glycerol-3-phosphate into glycerol. Thereby, regulates the cellular levels of glycerol-3-phosphate a metabolic intermediate of glucose, lipid and energy metabolism. Was also shown to have a 2-phosphoglycolate phosphatase activity and a tyrosine-protein phosphatase activity. However, their physiological relevance is unclear. In vitro, also has a phosphatase activity toward ADP, ATP, GDP and GTP. This chain is Glycerol-3-phosphate phosphatase, found in Gallus gallus (Chicken).